The primary structure comprises 397 residues: Dual specificity mitogen-activated protein kinase kinase 4 (397 aa).

Residues 1 to 38 form a disordered region; sequence MAAPSPSGGGGSGGGGGTPGPIGPPASGHPAVSSMQGK. The residue at position 2 (A2) is an N-acetylalanine. Residues 7–20 are compositionally biased toward gly residues; sequence SGGGGSGGGGGTPG. The segment at 35 to 50 is d domain; that stretch reads MQGKRKALKLNFANPP. R56 carries the asymmetric dimethylarginine; alternate modification. Position 56 is an omega-N-methylarginine; alternate (R56). S88 bears the Phosphoserine mark. Residues 100 to 366 enclose the Protein kinase domain; that stretch reads LKDLGEIGRG…KELLKHPFIL (267 aa). ATP-binding positions include 106–114 and K129; that span reads IGRGAYGSV. Catalysis depends on D227, which acts as the Proton acceptor. S255 carries the phosphoserine modification. At T259 the chain carries Phosphothreonine. The interval 362 to 385 is DVD domain; that stretch reads HPFILMYEERTVEVACYVCKILDQ.

It belongs to the protein kinase superfamily. STE Ser/Thr protein kinase family. MAP kinase kinase subfamily. In terms of assembly, interacts with SPAG9. Interacts (via its D domain) with its substrates MAPK8/JNK1, MAPK9/JNK2, MAPK10/JNK3, MAPK11 and MAPK14. Interacts (via its DVD domain) with MAP3Ks activators like MAP3K1/MEKK1 and MAP3K11/MLK3. Interacts with ARRB1, ARRB2 and MAPK8IP3/JIP3. Activated by phosphorylation on Ser-255 and Thr-259 by MAP kinase kinase kinases (MAP3Ks). As to expression, strong expression is detected in most of the central nervous system and in liver and thymus during early stages of development. While expression in nervous system increases over time, expression in fetal liver and thymus gradually decreases as embryogenesis proceeds. High level of expression in the central nervous system persists throughout postnatal development and remained at a stable level in adult brain.

Its subcellular location is the cytoplasm. The protein resides in the nucleus. The catalysed reaction is L-seryl-[protein] + ATP = O-phospho-L-seryl-[protein] + ADP + H(+). The enzyme catalyses L-threonyl-[protein] + ATP = O-phospho-L-threonyl-[protein] + ADP + H(+). It carries out the reaction L-tyrosyl-[protein] + ATP = O-phospho-L-tyrosyl-[protein] + ADP + H(+). Its activity is regulated as follows. Activated in response to a variety of cellular stresses, including UV and gamma-irradiation, heat shock, hyperosmolarity, T-cell receptor stimulation, peroxide and inflammatory cytokines. Also activated by developmental cues. MAP2K4/MKK4 is activated by the majority of MKKKs, such as MAP3K5/ASK1, MAP3K1/MEKK1, MAP3K7/TAK1, MAP3K10/MLK2, MAP3K11/MLK3, MAP3K12/DLK and MAP3K13/LZK. Functionally, dual specificity protein kinase which acts as an essential component of the MAP kinase signal transduction pathway. Essential component of the stress-activated protein kinase/c-Jun N-terminal kinase (SAP/JNK) signaling pathway. With MAP2K7/MKK7, is the one of the only known kinase to directly activate the stress-activated protein kinase/c-Jun N-terminal kinases MAPK8/JNK1, MAPK9/JNK2 and MAPK10/JNK3. MAP2K4/MKK4 and MAP2K7/MKK7 both activate the JNKs by phosphorylation, but they differ in their preference for the phosphorylation site in the Thr-Pro-Tyr motif. MAP2K4 shows preference for phosphorylation of the Tyr residue and MAP2K7/MKK7 for the Thr residue. The phosphorylation of the Thr residue by MAP2K7/MKK7 seems to be the prerequisite for JNK activation at least in response to pro-inflammatory cytokines, while other stimuli activate both MAP2K4/MKK4 and MAP2K7/MKK7 which synergistically phosphorylate JNKs. MAP2K4 is required for maintaining peripheral lymphoid homeostasis. The MKK/JNK signaling pathway is also involved in mitochondrial death signaling pathway, including the release cytochrome c, leading to apoptosis. Whereas MAP2K7/MKK7 exclusively activates JNKs, MAP2K4/MKK4 additionally activates the p38 MAPKs MAPK11, MAPK12, MAPK13 and MAPK14. This chain is Dual specificity mitogen-activated protein kinase kinase 4 (Map2k4), found in Mus musculus (Mouse).